The primary structure comprises 265 residues: MNEQPLIAALSLQRAGAPRVGGDRIRLLEAIARHGTIAGAAREVGLSYKTAWDAVGTLNNLFEQPLVEAAPGGRTGGNARVTEAGQALIAGFGLLEGALTKALGVLEGGVSAPEKALNTLWSLTMRTSNRNTLRCTVTRVTLGAVNAEVELALTDGHSLTAVITERSATEMGLAPGVEVFALIKASFVMLAAGGDPGRISACNRLTGIVAARTDGPVNTEIILDLGNCKSITAVITHTSADALGLAPGVPATALFKASHVILAMP.

Mop domains lie at 126–192 (RTSN…MLAA) and 198–264 (RISA…ILAM).

Belongs to the ModE family.

This chain is Molybdenum-pterin-binding protein MopA (mopA), found in Rhodobacter capsulatus (Rhodopseudomonas capsulata).